The following is a 430-amino-acid chain: Serine--tRNA ligase (430 aa).

The segment at 44-65 (TESLQAERNSRSKSIGAAKARG) is disordered. Residue 237–239 (TAE) participates in L-serine binding. 268 to 270 (RSE) is an ATP binding site. Glutamate 291 contributes to the L-serine binding site. ATP is bound at residue 355 to 358 (EISS). Serine 391 contacts L-serine.

This sequence belongs to the class-II aminoacyl-tRNA synthetase family. Type-1 seryl-tRNA synthetase subfamily. As to quaternary structure, homodimer. The tRNA molecule binds across the dimer.

The protein localises to the cytoplasm. It catalyses the reaction tRNA(Ser) + L-serine + ATP = L-seryl-tRNA(Ser) + AMP + diphosphate + H(+). It carries out the reaction tRNA(Sec) + L-serine + ATP = L-seryl-tRNA(Sec) + AMP + diphosphate + H(+). It functions in the pathway aminoacyl-tRNA biosynthesis; selenocysteinyl-tRNA(Sec) biosynthesis; L-seryl-tRNA(Sec) from L-serine and tRNA(Sec): step 1/1. Catalyzes the attachment of serine to tRNA(Ser). Is also able to aminoacylate tRNA(Sec) with serine, to form the misacylated tRNA L-seryl-tRNA(Sec), which will be further converted into selenocysteinyl-tRNA(Sec). In Edwardsiella ictaluri (strain 93-146), this protein is Serine--tRNA ligase.